We begin with the raw amino-acid sequence, 1568 residues long: Pentafunctional AROM polypeptide (1568 aa).

The 3-dehydroquinate synthase stretch occupies residues 1–380 (MSQVEKVSIL…YQLKAHEVSK (380 aa)). Residues 43 to 45 (DSN), 81 to 84 (ENNK), 112 to 114 (GGV), and Asp117 contribute to the NAD(+) site. 7-phospho-2-dehydro-3-deoxy-D-arabino-heptonate is bound at residue Arg128. 137 to 138 (TT) is an NAD(+) binding site. Residues Asp144 and Lys150 each coordinate 7-phospho-2-dehydro-3-deoxy-D-arabino-heptonate. Lys159 contacts NAD(+). Asn160 serves as a coordination point for 7-phospho-2-dehydro-3-deoxy-D-arabino-heptonate. NAD(+) is bound by residues 177–180 (FLTT) and Asn188. Residue Glu192 coordinates Zn(2+). Residues 192–195 (EVVK) and Lys244 each bind 7-phospho-2-dehydro-3-deoxy-D-arabino-heptonate. Glu254 functions as the Proton acceptor; for 3-dehydroquinate synthase activity in the catalytic mechanism. 7-phospho-2-dehydro-3-deoxy-D-arabino-heptonate contacts are provided by residues 258–262 (RNLLN) and His265. His265 lines the Zn(2+) pocket. Residue His269 is the Proton acceptor; for 3-dehydroquinate synthase activity of the active site. Positions 281 and 352 each coordinate 7-phospho-2-dehydro-3-deoxy-D-arabino-heptonate. His281 contacts Zn(2+). The interval 393–842 (VHPFQEETTP…WDVLHTKFGV (450 aa)) is EPSP synthase. Cys824 serves as the catalytic For EPSP synthase activity. Residues 867 to 1056 (DKSIVVIGMR…VPKGRSFVLS (190 aa)) form a shikimate kinase region. An ATP-binding site is contributed by 874-881 (GMRAAGKS). Residues 1057-1267 (LACSDLNDIA…SGNGQLTVGE (211 aa)) form a 3-dehydroquinase region. The tract at residues 1280-1568 (RRNFYIVGNP…VYEAVVDDNV (289 aa)) is shikimate dehydrogenase.

The protein in the N-terminal section; belongs to the sugar phosphate cyclases superfamily. Dehydroquinate synthase family. It in the 2nd section; belongs to the EPSP synthase family. This sequence in the 3rd section; belongs to the shikimate kinase family. In the 4th section; belongs to the type-I 3-dehydroquinase family. The protein in the C-terminal section; belongs to the shikimate dehydrogenase family. In terms of assembly, homodimer. Requires Zn(2+) as cofactor.

Its subcellular location is the cytoplasm. It carries out the reaction 7-phospho-2-dehydro-3-deoxy-D-arabino-heptonate = 3-dehydroquinate + phosphate. The enzyme catalyses 3-dehydroquinate = 3-dehydroshikimate + H2O. It catalyses the reaction shikimate + NADP(+) = 3-dehydroshikimate + NADPH + H(+). The catalysed reaction is shikimate + ATP = 3-phosphoshikimate + ADP + H(+). It carries out the reaction 3-phosphoshikimate + phosphoenolpyruvate = 5-O-(1-carboxyvinyl)-3-phosphoshikimate + phosphate. Its pathway is metabolic intermediate biosynthesis; chorismate biosynthesis; chorismate from D-erythrose 4-phosphate and phosphoenolpyruvate: step 2/7. It participates in metabolic intermediate biosynthesis; chorismate biosynthesis; chorismate from D-erythrose 4-phosphate and phosphoenolpyruvate: step 3/7. The protein operates within metabolic intermediate biosynthesis; chorismate biosynthesis; chorismate from D-erythrose 4-phosphate and phosphoenolpyruvate: step 4/7. It functions in the pathway metabolic intermediate biosynthesis; chorismate biosynthesis; chorismate from D-erythrose 4-phosphate and phosphoenolpyruvate: step 5/7. Its pathway is metabolic intermediate biosynthesis; chorismate biosynthesis; chorismate from D-erythrose 4-phosphate and phosphoenolpyruvate: step 6/7. In terms of biological role, the AROM polypeptide catalyzes 5 consecutive enzymatic reactions in prechorismate polyaromatic amino acid biosynthesis. This is Pentafunctional AROM polypeptide from Clavispora lusitaniae (strain ATCC 42720) (Yeast).